Here is a 306-residue protein sequence, read N- to C-terminus: D-alanine--D-alanine ligase (306 aa).

Residues 102–300 (KIIAASAGVS…YGDIVKWIVE (199 aa)) form the ATP-grasp domain. 128–183 (PMKPPYVIKPIREGSSFGVVIVGSDETMPLHDIMNNEWVYDDEIMVEKYVPGRELT) is an ATP binding site. Residues D253, E267, and N269 each contribute to the Mg(2+) site.

Belongs to the D-alanine--D-alanine ligase family. The cofactor is Mg(2+). Mn(2+) is required as a cofactor.

It is found in the cytoplasm. It catalyses the reaction 2 D-alanine + ATP = D-alanyl-D-alanine + ADP + phosphate + H(+). It participates in cell wall biogenesis; peptidoglycan biosynthesis. Functionally, cell wall formation. The protein is D-alanine--D-alanine ligase of Bartonella bacilliformis (strain ATCC 35685 / KC583 / Herrer 020/F12,63).